A 103-amino-acid chain; its full sequence is Histone H4 (103 aa).

Positions 1 to 14 (MTGRGKGGKGLGKG) are enriched in gly residues. Residues 1-20 (MTGRGKGGKGLGKGGAKRHR) form a disordered region. N6-acetyl-N6-methyllysine; alternate is present on residues Lys6 and Lys13. Residues 17–21 (KRHRK) mediate DNA binding.

Belongs to the histone H4 family. The nucleosome is a histone octamer containing two molecules each of H2A, H2B, H3 and H4 assembled in one H3-H4 heterotetramer and two H2A-H2B heterodimers. The octamer wraps approximately 147 bp of DNA.

The protein resides in the nucleus. The protein localises to the chromosome. Functionally, core component of nucleosome. Nucleosomes wrap and compact DNA into chromatin, limiting DNA accessibility to the cellular machineries which require DNA as a template. Histones thereby play a central role in transcription regulation, DNA repair, DNA replication and chromosomal stability. DNA accessibility is regulated via a complex set of post-translational modifications of histones, also called histone code, and nucleosome remodeling. The protein is Histone H4 (His4) of Myrmica ruginodis (Red ant).